The following is a 363-amino-acid chain: 3-isopropylmalate dehydrogenase (363 aa).

78–91 serves as a coordination point for NAD(+); it reads XXXXXXXXXXXXXX. Substrate contacts are provided by Arg-99, Arg-109, Arg-138, and Asp-227. Positions 227, 251, and 255 each coordinate Mg(2+). 285-297 is a binding site for NAD(+); that stretch reads GSAPDIEGKNIAN.

This sequence belongs to the isocitrate and isopropylmalate dehydrogenases family. LeuB type 1 subfamily. In terms of assembly, homodimer. The cofactor is Mg(2+). Requires Mn(2+) as cofactor.

The protein resides in the cytoplasm. The enzyme catalyses (2R,3S)-3-isopropylmalate + NAD(+) = 4-methyl-2-oxopentanoate + CO2 + NADH. The protein operates within amino-acid biosynthesis; L-leucine biosynthesis; L-leucine from 3-methyl-2-oxobutanoate: step 3/4. Its function is as follows. Catalyzes the oxidation of 3-carboxy-2-hydroxy-4-methylpentanoate (3-isopropylmalate) to 3-carboxy-4-methyl-2-oxopentanoate. The product decarboxylates to 4-methyl-2 oxopentanoate. In Buchnera aphidicola subsp. Uroleucon solidaginis, this protein is 3-isopropylmalate dehydrogenase.